The sequence spans 159 residues: Ribosomal RNA large subunit methyltransferase H (159 aa).

S-adenosyl-L-methionine is bound by residues leucine 76, glycine 108, and 127-132 (FGLLTL).

Belongs to the RNA methyltransferase RlmH family. As to quaternary structure, homodimer.

The protein localises to the cytoplasm. It catalyses the reaction pseudouridine(1915) in 23S rRNA + S-adenosyl-L-methionine = N(3)-methylpseudouridine(1915) in 23S rRNA + S-adenosyl-L-homocysteine + H(+). In terms of biological role, specifically methylates the pseudouridine at position 1915 (m3Psi1915) in 23S rRNA. The protein is Ribosomal RNA large subunit methyltransferase H of Streptococcus agalactiae serotype Ia (strain ATCC 27591 / A909 / CDC SS700).